We begin with the raw amino-acid sequence, 251 residues long: Hydroxyacylglutathione hydrolase (251 aa).

The Zn(2+) site is built by histidine 53, histidine 55, aspartate 57, histidine 58, histidine 110, aspartate 127, and histidine 165.

Belongs to the metallo-beta-lactamase superfamily. Glyoxalase II family. As to quaternary structure, monomer. Zn(2+) serves as cofactor.

It catalyses the reaction an S-(2-hydroxyacyl)glutathione + H2O = a 2-hydroxy carboxylate + glutathione + H(+). It participates in secondary metabolite metabolism; methylglyoxal degradation; (R)-lactate from methylglyoxal: step 2/2. Its function is as follows. Thiolesterase that catalyzes the hydrolysis of S-D-lactoyl-glutathione to form glutathione and D-lactic acid. This Escherichia coli O45:K1 (strain S88 / ExPEC) protein is Hydroxyacylglutathione hydrolase.